Consider the following 483-residue polypeptide: Rhamnulokinase (483 aa).

11-15 (ASSGR) provides a ligand contact to ATP. Residues G79 and 234-236 (HDT) each bind substrate. D235 (proton acceptor) is an active-site residue. T257 serves as a coordination point for ATP. Substrate is bound at residue N294. Q302 contacts ATP. Cysteines 352 and 369 form a disulfide. G401 contributes to the ATP binding site.

It belongs to the rhamnulokinase family. Mg(2+) serves as cofactor.

It carries out the reaction L-rhamnulose + ATP = L-rhamnulose 1-phosphate + ADP + H(+). It participates in carbohydrate degradation; L-rhamnose degradation; glycerone phosphate from L-rhamnose: step 2/3. In terms of biological role, involved in the catabolism of L-rhamnose (6-deoxy-L-mannose). Catalyzes the transfer of the gamma-phosphate group from ATP to the 1-hydroxyl group of L-rhamnulose to yield L-rhamnulose 1-phosphate. The chain is Rhamnulokinase from Listeria monocytogenes serotype 4b (strain CLIP80459).